Reading from the N-terminus, the 180-residue chain is ATP synthase subunit delta (180 aa).

Belongs to the ATPase delta chain family. In terms of assembly, F-type ATPases have 2 components, F(1) - the catalytic core - and F(0) - the membrane proton channel. F(1) has five subunits: alpha(3), beta(3), gamma(1), delta(1), epsilon(1). F(0) has three main subunits: a(1), b(2) and c(10-14). The alpha and beta chains form an alternating ring which encloses part of the gamma chain. F(1) is attached to F(0) by a central stalk formed by the gamma and epsilon chains, while a peripheral stalk is formed by the delta and b chains.

It is found in the cell membrane. In terms of biological role, f(1)F(0) ATP synthase produces ATP from ADP in the presence of a proton or sodium gradient. F-type ATPases consist of two structural domains, F(1) containing the extramembraneous catalytic core and F(0) containing the membrane proton channel, linked together by a central stalk and a peripheral stalk. During catalysis, ATP synthesis in the catalytic domain of F(1) is coupled via a rotary mechanism of the central stalk subunits to proton translocation. Its function is as follows. This protein is part of the stalk that links CF(0) to CF(1). It either transmits conformational changes from CF(0) to CF(1) or is implicated in proton conduction. This Bacillus cytotoxicus (strain DSM 22905 / CIP 110041 / 391-98 / NVH 391-98) protein is ATP synthase subunit delta.